The sequence spans 77 residues: Putative snRNP Sm-like protein (77 aa).

Residues 8–77 enclose the Sm domain; that stretch reads PTLRMMLDYV…DSVVVITPAA (70 aa).

The protein belongs to the snRNP Sm proteins family.

This Aeropyrum pernix (strain ATCC 700893 / DSM 11879 / JCM 9820 / NBRC 100138 / K1) protein is Putative snRNP Sm-like protein.